The sequence spans 79 residues: D-alanyl carrier protein (79 aa).

Positions Ala2–Arg79 constitute a Carrier domain. Position 37 is an O-(pantetheine 4'-phosphoryl)serine (Ser37).

This sequence belongs to the DltC family. 4'-phosphopantetheine is transferred from CoA to a specific serine of apo-DCP.

The protein localises to the cytoplasm. The protein operates within cell wall biogenesis; lipoteichoic acid biosynthesis. Carrier protein involved in the D-alanylation of lipoteichoic acid (LTA). The loading of thioester-linked D-alanine onto DltC is catalyzed by D-alanine--D-alanyl carrier protein ligase DltA. The DltC-carried D-alanyl group is further transferred to cell membrane phosphatidylglycerol (PG) by forming an ester bond, probably catalyzed by DltD. D-alanylation of LTA plays an important role in modulating the properties of the cell wall in Gram-positive bacteria, influencing the net charge of the cell wall. The protein is D-alanyl carrier protein of Bacillus mycoides (strain KBAB4) (Bacillus weihenstephanensis).